The sequence spans 207 residues: Probable nicotinate-nucleotide adenylyltransferase (207 aa).

It belongs to the NadD family.

It catalyses the reaction nicotinate beta-D-ribonucleotide + ATP + H(+) = deamido-NAD(+) + diphosphate. Its pathway is cofactor biosynthesis; NAD(+) biosynthesis; deamido-NAD(+) from nicotinate D-ribonucleotide: step 1/1. Functionally, catalyzes the reversible adenylation of nicotinate mononucleotide (NaMN) to nicotinic acid adenine dinucleotide (NaAD). The protein is Probable nicotinate-nucleotide adenylyltransferase of Desulfitobacterium hafniense (strain DSM 10664 / DCB-2).